The following is a 269-amino-acid chain: Imidazoleglycerol-phosphate dehydratase 1, chloroplastic (269 aa).

Disordered regions lie at residues 1–31 (MTTAPFVSPSLPRLHSARASPFPKPSVGSGG) and 54–73 (SGVGGNGSPMAPEESTVSSR). The transit peptide at 1–52 (MTTAPFVSPSLPRLHSARASPFPKPSVGSGGGVAFPARTYGSSLRLRSAVMS) directs the protein to the chloroplast. Substrate contacts are provided by residues glutamate 83, 109-117 (HMLDQLASH), 135-139 (HHSNE), arginine 161, and arginine 183. The Mn(2+) site is built by histidine 109, histidine 135, histidine 136, and glutamate 139. Mn(2+)-binding residues include histidine 207, histidine 231, histidine 232, and glutamate 235. Residues 231–239 (HHIIEATFK) and 261–263 (SSK) each bind substrate.

It belongs to the imidazoleglycerol-phosphate dehydratase family. Requires Mn(2+) as cofactor.

The protein resides in the plastid. It localises to the chloroplast. It carries out the reaction D-erythro-1-(imidazol-4-yl)glycerol 3-phosphate = 3-(imidazol-4-yl)-2-oxopropyl phosphate + H2O. It functions in the pathway amino-acid biosynthesis; L-histidine biosynthesis; L-histidine from 5-phospho-alpha-D-ribose 1-diphosphate: step 6/9. This is Imidazoleglycerol-phosphate dehydratase 1, chloroplastic from Triticum aestivum (Wheat).